Consider the following 255-residue polypeptide: Leucyl/phenylalanyl-tRNA--protein transferase (255 aa).

This sequence belongs to the L/F-transferase family.

It localises to the cytoplasm. It catalyses the reaction N-terminal L-lysyl-[protein] + L-leucyl-tRNA(Leu) = N-terminal L-leucyl-L-lysyl-[protein] + tRNA(Leu) + H(+). The catalysed reaction is N-terminal L-arginyl-[protein] + L-leucyl-tRNA(Leu) = N-terminal L-leucyl-L-arginyl-[protein] + tRNA(Leu) + H(+). It carries out the reaction L-phenylalanyl-tRNA(Phe) + an N-terminal L-alpha-aminoacyl-[protein] = an N-terminal L-phenylalanyl-L-alpha-aminoacyl-[protein] + tRNA(Phe). Functionally, functions in the N-end rule pathway of protein degradation where it conjugates Leu, Phe and, less efficiently, Met from aminoacyl-tRNAs to the N-termini of proteins containing an N-terminal arginine or lysine. The sequence is that of Leucyl/phenylalanyl-tRNA--protein transferase from Burkholderia thailandensis (strain ATCC 700388 / DSM 13276 / CCUG 48851 / CIP 106301 / E264).